The following is a 483-amino-acid chain: Probable glycine dehydrogenase (decarboxylating) subunit 2 (483 aa).

Lys-264 carries the post-translational modification N6-(pyridoxal phosphate)lysine.

It belongs to the GcvP family. C-terminal subunit subfamily. As to quaternary structure, the glycine cleavage system is composed of four proteins: P, T, L and H. In this organism, the P 'protein' is a heterodimer of two subunits. Requires pyridoxal 5'-phosphate as cofactor.

The catalysed reaction is N(6)-[(R)-lipoyl]-L-lysyl-[glycine-cleavage complex H protein] + glycine + H(+) = N(6)-[(R)-S(8)-aminomethyldihydrolipoyl]-L-lysyl-[glycine-cleavage complex H protein] + CO2. In terms of biological role, the glycine cleavage system catalyzes the degradation of glycine. The P protein binds the alpha-amino group of glycine through its pyridoxal phosphate cofactor; CO(2) is released and the remaining methylamine moiety is then transferred to the lipoamide cofactor of the H protein. The protein is Probable glycine dehydrogenase (decarboxylating) subunit 2 of Nitrosomonas eutropha (strain DSM 101675 / C91 / Nm57).